We begin with the raw amino-acid sequence, 177 residues long: Large ribosomal subunit protein uL6 (177 aa).

It belongs to the universal ribosomal protein uL6 family. In terms of assembly, part of the 50S ribosomal subunit.

In terms of biological role, this protein binds to the 23S rRNA, and is important in its secondary structure. It is located near the subunit interface in the base of the L7/L12 stalk, and near the tRNA binding site of the peptidyltransferase center. The polypeptide is Large ribosomal subunit protein uL6 (Aliivibrio salmonicida (strain LFI1238) (Vibrio salmonicida (strain LFI1238))).